We begin with the raw amino-acid sequence, 136 residues long: S-protein homolog 6 (136 aa).

Residues 1 to 17 (MFIIIFIVLISLIGCET) form the signal peptide. 2 N-linked (GlcNAc...) asparagine glycosylation sites follow: N76 and N108.

It belongs to the plant self-incompatibility (S1) protein family.

It localises to the secreted. The chain is S-protein homolog 6 from Arabidopsis thaliana (Mouse-ear cress).